Here is a 251-residue protein sequence, read N- to C-terminus: uncharacterized protein (251 aa).

The 56-residue stretch at 3–58 (TPERHQLIIDQIEKHDVVKIQELINLTNASESTIRRDLSTLEERGFLKRVHGGAAK) folds into the HTH deoR-type domain. Positions 20–39 (VKIQELINLTNASESTIRRD) form a DNA-binding region, H-T-H motif.

This is an uncharacterized protein from Bacillus subtilis (strain 168).